Here is a 109-residue protein sequence, read N- to C-terminus: Movement protein TGB2 (109 aa).

Residues 1–9 (MPLTPPPDF) lie on the Cytoplasmic side of the membrane. The helical transmembrane segment at 10 to 30 (TKVYLSAALGVSLALVVWLLI) threads the bilayer. Topologically, residues 31 to 72 (RSTLPVVGDRDHNLPHGGWYRDGTKSVFYNSPGRLNSIEARK) are lumenal. A helical transmembrane segment spans residues 73-93 (APLLGQPWAIVVLLVLLIWAS). Residues 94–109 (HKLGRPNCRACAGSHT) are Cytoplasmic-facing.

This sequence belongs to the Tymovirales TGBp2 protein family.

The protein localises to the host endoplasmic reticulum membrane. Its function is as follows. Plays a role in viral cell-to-cell propagation, by facilitating genome transport to neighboring plant cells through plasmosdesmata,. The sequence is that of Movement protein TGB2 from Solanum tuberosum (Potato).